A 462-amino-acid chain; its full sequence is Serine--tRNA ligase, cytoplasmic (462 aa).

A Glycyl lysine isopeptide (Lys-Gly) (interchain with G-Cter in URM1) cross-link involves residue lysine 241. 246–248 (TSE) is an L-serine binding site. Residues 279-281 (RRE) and valine 295 each bind ATP. Residue glutamate 302 coordinates L-serine. Residues lysine 350 and lysine 351 each participate in a glycyl lysine isopeptide (Lys-Gly) (interchain with G-Cter in URM1) cross-link. 366–369 (ELVS) provides a ligand contact to ATP. Cysteine 373 and cysteine 400 each carry cysteine persulfide. An L-serine-binding site is contributed by threonine 404.

This sequence belongs to the class-II aminoacyl-tRNA synthetase family. Type-1 seryl-tRNA synthetase subfamily. Homodimer; the tRNA molecule probably binds across the dimer. Interacts with ABP140; interaction is required for the tRNA N(3)-methylcytidine methyltransferase activity of ABP140. Conjugated to URM1, a ubiquitin-like protein, in response to oxidative stresses. The attachment of URM1 to lysine residues exclusively depends on the presence of a peroxidatic cysteine in the target protein, with low specificity for the particular residue, motif, or structural context at which urmylation can occur. The URM1-conjugation reaction is mechanistically and directly coupled to the process of cysteine persulfidation, transfering the sulfur atom of the URM1 thiocarboxyl group to redox-active cysteine residues in the target protein if it is exposed to oxidative conditions. Post-translationally, persulfidated on specific redox-active cysteine residues. Persulfidation (also called protein S-sulfhydration) may provide a molecular mechanism that enables cells to protect vulnerable cysteine residues from reactive oxygen species (ROS) under stress conditions.

Its subcellular location is the cytoplasm. The protein resides in the cytosol. It carries out the reaction tRNA(Ser) + L-serine + ATP = L-seryl-tRNA(Ser) + AMP + diphosphate + H(+). Catalyzes the attachment of serine to tRNA(Ser) in a two-step reaction: serine is first activated by ATP to form Ser-AMP and then transferred to the acceptor end of tRNA(Ser). The sequence is that of Serine--tRNA ligase, cytoplasmic (SES1) from Saccharomyces cerevisiae (strain ATCC 204508 / S288c) (Baker's yeast).